We begin with the raw amino-acid sequence, 573 residues long: Lauric acid 10-hydroxylase (573 aa).

Helical transmembrane passes span 3–23 (YVNI…LMSL) and 298–318 (LFPT…LLIF). Cysteine 516 provides a ligand contact to heme.

The protein belongs to the cytochrome P450 family. The cofactor is heme. In terms of tissue distribution, mostly expressed in flowers and leaves and, at low levels, in roots and stems.

Its subcellular location is the endoplasmic reticulum membrane. The enzyme catalyses an omega-methyl-medium-chain fatty acid + reduced [NADPH--hemoprotein reductase] + O2 = an omega-hydroxy-medium-chain fatty acid + oxidized [NADPH--hemoprotein reductase] + H2O + H(+). It catalyses the reaction decanoate + reduced [NADPH--hemoprotein reductase] + O2 = 10-hydroxydecanoate + oxidized [NADPH--hemoprotein reductase] + H2O + H(+). The catalysed reaction is dodecanoate + reduced [NADPH--hemoprotein reductase] + O2 = 12-hydroxydodecanoate + oxidized [NADPH--hemoprotein reductase] + H2O + H(+). Its pathway is lipid metabolism; fatty acid metabolism. Its function is as follows. Cytochrome P450 hydroxylase catalyzing the conversion of decanoate (capric acid) and dodecanoate (lauric acid) to their corresponding omega-hydroxy metabolites, 10-hydroxydecanoate and 12-hydroxydodecanoate, respectively; these hydroxylated components affect plant growth, including reducing root elongation. This chain is Lauric acid 10-hydroxylase, found in Petunia hybrida (Petunia).